A 284-amino-acid chain; its full sequence is Ribose-phosphate pyrophosphokinase (284 aa).

Residues 34 to 36 (DNE) and 92 to 93 (RQ) contribute to the ATP site. Mg(2+) contacts are provided by His-125 and Asp-163. The active site involves Lys-186. D-ribose 5-phosphate is bound by residues Arg-188, Asp-212, and 216 to 220 (STGGT).

The protein belongs to the ribose-phosphate pyrophosphokinase family. Class III (archaeal) subfamily. As to quaternary structure, homotetramer. The cofactor is Mg(2+).

It localises to the cytoplasm. The enzyme catalyses D-ribose 5-phosphate + ATP = 5-phospho-alpha-D-ribose 1-diphosphate + AMP + H(+). It participates in metabolic intermediate biosynthesis; 5-phospho-alpha-D-ribose 1-diphosphate biosynthesis; 5-phospho-alpha-D-ribose 1-diphosphate from D-ribose 5-phosphate (route I): step 1/1. Its activity is regulated as follows. Activated by inorganic phosphate, with a maximal activity at 190 mM. Above this concentration inorganic phosphate progressively inhibits the kinase. Completely inhibited by ADP, and partially inhibited by alpha,beta-methylene ATP (mATP). Lack of allosteric regulation. In terms of biological role, involved in the biosynthesis of the central metabolite phospho-alpha-D-ribosyl-1-pyrophosphate (PRPP) via the transfer of pyrophosphoryl group from ATP to 1-hydroxyl of ribose-5-phosphate (Rib-5-P). It can also use dATP as diphosphoryl donor. This chain is Ribose-phosphate pyrophosphokinase, found in Methanocaldococcus jannaschii (strain ATCC 43067 / DSM 2661 / JAL-1 / JCM 10045 / NBRC 100440) (Methanococcus jannaschii).